The chain runs to 84 residues: Sulfur carrier protein TusA (84 aa).

Cys19 acts as the Cysteine persulfide intermediate in catalysis.

This sequence belongs to the sulfur carrier protein TusA family. Interacts with IscS.

The protein localises to the cytoplasm. The protein operates within tRNA modification. Functionally, sulfur carrier protein involved in sulfur trafficking in the cell. Part of a sulfur-relay system required for 2-thiolation during synthesis of 2-thiouridine of the modified wobble base 5-methylaminomethyl-2-thiouridine (mnm(5)s(2)U) in tRNA. Interacts with IscS and stimulates its cysteine desulfurase activity. Accepts an activated sulfur from IscS, which is then transferred to TusD, and thus determines the direction of sulfur flow from IscS to 2-thiouridine formation. Also appears to be involved in sulfur transfer for the biosynthesis of molybdopterin. The sequence is that of Sulfur carrier protein TusA from Yersinia enterocolitica serotype O:8 / biotype 1B (strain NCTC 13174 / 8081).